The primary structure comprises 251 residues: Adenosine 5'-phosphosulfate reductase (251 aa).

[4Fe-4S] cluster contacts are provided by Cys-121, Cys-122, Cys-204, and Cys-207. Catalysis depends on Cys-232, which acts as the Nucleophile; cysteine thiosulfonate intermediate.

This sequence belongs to the PAPS reductase family. CysH subfamily. It depends on [4Fe-4S] cluster as a cofactor.

Its subcellular location is the cytoplasm. The catalysed reaction is [thioredoxin]-disulfide + sulfite + AMP + 2 H(+) = adenosine 5'-phosphosulfate + [thioredoxin]-dithiol. It functions in the pathway sulfur metabolism; hydrogen sulfide biosynthesis; sulfite from sulfate. Catalyzes the formation of sulfite from adenosine 5'-phosphosulfate (APS) using thioredoxin as an electron donor. The polypeptide is Adenosine 5'-phosphosulfate reductase (Sinorhizobium fredii (strain NBRC 101917 / NGR234)).